The following is a 224-amino-acid chain: MHGTDSSSDTPGQPAPSRAELLSAHAEGSISEDTILKTARDRAVDIGVGAVTPAVGALLSMLAKLSGGKAVAEVGTGAGVSGLWLLSGMSDDGVLTTIDIEPEHLRVAKQAFTEAGIGPSRTRLISGRAQEVLTRLADDSYDLVFVDADPIDQPDYVVEGVRLLRSGGVIVVHRAALGGRAGDPAARDAEVTAVREAARLIAEDERLTPALVPLGDGVLAAVRD.

Positions 1 to 11 (MHGTDSSSDTP) are enriched in polar residues. The segment at 1 to 20 (MHGTDSSSDTPGQPAPSRAE) is disordered. S-adenosyl-L-methionine contacts are provided by residues Val51, Glu73, 75–76 (GT), Ser81, Asp99, and Ile100. Asp147 lines the substrate pocket. Residue Asp149 participates in S-adenosyl-L-methionine binding.

Belongs to the class I-like SAM-binding methyltransferase superfamily. Cation-dependent O-methyltransferase family.

The sequence is that of Putative O-methyltransferase MMAR_4217 from Mycobacterium marinum (strain ATCC BAA-535 / M).